We begin with the raw amino-acid sequence, 444 residues long: Type I restriction enzyme EcoDI specificity subunit (444 aa).

It belongs to the type-I restriction system S methylase family. The type I restriction/modification system is composed of three polypeptides R, M and S; the restriction enzyme has stoichiometry R(2)M(2)S(1) while the methyltransferase is M(2)S(1).

Its function is as follows. The specificity (S) subunit of a type I restriction enzyme; this subunit dictates DNA sequence specificity. The M and S subunits together form a methyltransferase (MTase) that methylates two adenine residues of the sequence 5'-TTAN(7)GTCY-3'. In the presence of the R subunit the complex can also act as an endonuclease, binding to the same target sequence but cutting the DNA some distance from this site. Whether the DNA is cut or modified depends on the methylation state of the target sequence. When the target site is unmodified, the DNA is cut. When the target site is hemimethylated, the complex acts as a maintenance MTase modifying the DNA so that both strands become methylated. After locating a non-methylated recognition site, the enzyme complex serves as a molecular motor that translocates DNA in an ATP-dependent manner until a collision occurs that triggers cleavage. The polypeptide is Type I restriction enzyme EcoDI specificity subunit (Escherichia coli).